The primary structure comprises 290 residues: tRNA (guanine-N(7)-)-methyltransferase (290 aa).

Basic and acidic residues-rich tracts occupy residues 1 to 12 (MSDSLHTPEEPR) and 20 to 43 (AHAHDGSLRHTRAKGEPRFPDGPK). The interval 1-49 (MSDSLHTPEEPRPGPGEQLAHAHDGSLRHTRAKGEPRFPDGPKADPAGS) is disordered. Positions 104, 129, 156, and 179 each coordinate S-adenosyl-L-methionine. The active site involves D179. Substrate is bound by residues K183, D215, and 252–255 (TRFE).

The protein belongs to the class I-like SAM-binding methyltransferase superfamily. TrmB family.

It catalyses the reaction guanosine(46) in tRNA + S-adenosyl-L-methionine = N(7)-methylguanosine(46) in tRNA + S-adenosyl-L-homocysteine. The protein operates within tRNA modification; N(7)-methylguanine-tRNA biosynthesis. In terms of biological role, catalyzes the formation of N(7)-methylguanine at position 46 (m7G46) in tRNA. The sequence is that of tRNA (guanine-N(7)-)-methyltransferase from Streptomyces avermitilis (strain ATCC 31267 / DSM 46492 / JCM 5070 / NBRC 14893 / NCIMB 12804 / NRRL 8165 / MA-4680).